Reading from the N-terminus, the 179-residue chain is Large ribosomal subunit protein uL6 (179 aa).

It belongs to the universal ribosomal protein uL6 family. Part of the 50S ribosomal subunit.

This protein binds to the 23S rRNA, and is important in its secondary structure. It is located near the subunit interface in the base of the L7/L12 stalk, and near the tRNA binding site of the peptidyltransferase center. This is Large ribosomal subunit protein uL6 from Chlorobium phaeobacteroides (strain DSM 266 / SMG 266 / 2430).